The following is a 398-amino-acid chain: ATP-dependent RNA helicase eIF4A (398 aa).

Residues 25–53 carry the Q motif motif; it reads DSFDSMDLKPELLRGIYAYGFERPSAIQQ. Residues 56–226 form the Helicase ATP-binding domain; the sequence is IMPIIKGSDV…TKFMRDPVRI (171 aa). Residue 69–76 participates in ATP binding; it reads AQSGTGKT. The DEAD box motif lies at 174–177; it reads DEAD. The region spanning 237–398 is the Helicase C-terminal domain; the sequence is GIKQFYIAVE…EMPMNVADLI (162 aa).

The protein belongs to the DEAD box helicase family. eIF4A subfamily. Component of the eIF4F complex, which composition varies with external and internal environmental conditions. It is composed of at least eIF4A, eIF4E and eIF4G.

It localises to the cytoplasm. It catalyses the reaction ATP + H2O = ADP + phosphate + H(+). In terms of biological role, ATP-dependent RNA helicase which is a subunit of the eIF4F complex involved in cap recognition and is required for mRNA binding to ribosome. In the current model of translation initiation, eIF4A unwinds RNA secondary structures in the 5'-UTR of mRNAs which is necessary to allow efficient binding of the small ribosomal subunit, and subsequent scanning for the initiator codon. In Aspergillus clavatus (strain ATCC 1007 / CBS 513.65 / DSM 816 / NCTC 3887 / NRRL 1 / QM 1276 / 107), this protein is ATP-dependent RNA helicase eIF4A (tif1).